A 260-amino-acid polypeptide reads, in one-letter code: NAD-capped RNA hydrolase NudC (260 aa).

Lys-25 and Arg-69 together coordinate substrate. Zn(2+) contacts are provided by Cys-98 and Cys-101. Position 111 (Glu-111) interacts with substrate. Residues Cys-116 and Cys-119 each coordinate Zn(2+). Position 124 (Tyr-124) interacts with substrate. In terms of domain architecture, Nudix hydrolase spans 125 to 248 (PQIAPCVIVA…TVARRLIEDT (124 aa)). 3 residues coordinate a divalent metal cation: Ala-158, Glu-174, and Glu-178. Residues 159–180 (GFVEVGETLEQAVSREVLEESN) carry the Nudix box motif. 192-199 (QPWPFPHS) serves as a coordination point for substrate. Glu-219 lines the a divalent metal cation pocket. Ala-241 contributes to the substrate binding site.

The protein belongs to the Nudix hydrolase family. NudC subfamily. As to quaternary structure, homodimer. It depends on Mg(2+) as a cofactor. Mn(2+) is required as a cofactor. The cofactor is Zn(2+).

It carries out the reaction a 5'-end NAD(+)-phospho-ribonucleoside in mRNA + H2O = a 5'-end phospho-adenosine-phospho-ribonucleoside in mRNA + beta-nicotinamide D-ribonucleotide + 2 H(+). The enzyme catalyses NAD(+) + H2O = beta-nicotinamide D-ribonucleotide + AMP + 2 H(+). It catalyses the reaction NADH + H2O = reduced beta-nicotinamide D-ribonucleotide + AMP + 2 H(+). MRNA decapping enzyme that specifically removes the nicotinamide adenine dinucleotide (NAD) cap from a subset of mRNAs by hydrolyzing the diphosphate linkage to produce nicotinamide mononucleotide (NMN) and 5' monophosphate mRNA. The NAD-cap is present at the 5'-end of some mRNAs and stabilizes RNA against 5'-processing. Has preference for mRNAs with a 5'-end purine. Catalyzes the hydrolysis of a broad range of dinucleotide pyrophosphates. The polypeptide is NAD-capped RNA hydrolase NudC (Yersinia pestis bv. Antiqua (strain Antiqua)).